Here is a 187-residue protein sequence, read N- to C-terminus: CASP-like protein 3A2 (187 aa).

The Cytoplasmic portion of the chain corresponds to 1 to 24 (MTSNGEGGEVVAKRRRKGIKELVQ). The helical transmembrane segment at 25 to 45 (VALRGGCLAASATAMAVMLTA) threads the bilayer. The Extracellular portion of the chain corresponds to 46-71 (TEEGVADIYGFKLTLSSNWSFSPSYQ). N-linked (GlcNAc...) asparagine glycosylation occurs at Asn-63. The chain crosses the membrane as a helical span at residues 72–92 (YVVGACAGTVLYSLLQLCLGV). Residues 93 to 107 (YRLVTGSPITPSRFQ) are Cytoplasmic-facing. The helical transmembrane segment at 108–128 (AWLCFTSDQLFCYLMMSAGSA) threads the bilayer. The Extracellular portion of the chain corresponds to 129–162 (GSGVTNLNKTGIRHTPLPDFCKTLSSFCNHVALS). A glycan (N-linked (GlcNAc...) asparagine) is linked at Asn-136. Residues 163 to 183 (LLLVFLSFIFLASSSFFTVLV) traverse the membrane as a helical segment. The Cytoplasmic segment spans residues 184–187 (LSTP).

This sequence belongs to the Casparian strip membrane proteins (CASP) family. As to quaternary structure, homodimer and heterodimers.

The protein localises to the cell membrane. In Arabidopsis thaliana (Mouse-ear cress), this protein is CASP-like protein 3A2.